The primary structure comprises 498 residues: Diacylglycerol O-acyltransferase 1 (498 aa).

A disordered region spans residues 1-66 (MGDRGGAGSS…AHTRDKDRQT (66 aa)). Over 1 to 92 (MGDRGGAGSS…SLFSSDSGFS (92 aa)) the chain is Cytoplasmic. The segment at 1–96 (MGDRGGAGSS…SDSGFSNYRG (96 aa)) is involved in homomerization. Ser20 bears the Phosphoserine mark. Basic and acidic residues predominate over residues 58–68 (HTRDKDRQTSV). The chain crosses the membrane as a helical span at residues 93–127 (NYRGILNWCVVMLILSNARLSLENLIKYGILVDPI). Over 128-139 (QVVSLFLKDPYS) the chain is Lumenal. The tract at residues 128–139 (QVVSLFLKDPYS) is extracellular loop 1 (EL1). Residues 140-165 (WPAPCLIIASNIFIVATFQIEKRLSV) traverse the membrane as a helical segment. Residues 140 to 498 (WPAPCLIIAS…VLNYDAPVGA (359 aa)) form an MBOAT fold region. Residues 166–170 (GALTE) are Cytoplasmic-facing. A helical transmembrane segment spans residues 171 to 193 (QMGLLLHVVNLATIICFPAAVAL). Residues 194-200 (LVESITP) lie on the Lumenal side of the membrane. Residues 201–232 (VGSLFALASYSIIFLKLSSYRDVNLWCRQRRV) form a helical membrane-spanning segment. Over 233 to 284 (KAKAVSAGKKVSGAAAQNTVSYPDNLTYRDLYYFIFAPTLCYELNFPRSPRI) the chain is Cytoplasmic. The segment at 235–287 (KAVSAGKKVSGAAAQNTVSYPDNLTYRDLYYFIFAPTLCYELNFPRSPRIRKR) is intracellular loop 1 (IL1). Residues 285-319 (RKRFLLRRVLEMLFFTQLQVGLIQQWMVPTIQNSM) form a helical membrane-spanning segment. Over 320–326 (KPFKDMD) the chain is Lumenal. Residues 327–364 (YSRIIERLLKLAVPNHLIWLIFFYWLFHSCLNAVAELL) form a helical membrane-spanning segment. The Cytoplasmic segment spans residues 365-410 (QFGDREFYRDWWNAESVTYFWQNWNIPVHKWCIRHFYKPMLRLGSN). The intracellular loop 2 (IL2) stretch occupies residues 365–410 (QFGDREFYRDWWNAESVTYFWQNWNIPVHKWCIRHFYKPMLRLGSN). Residues 371-377 (FYRDWWN) carry the FYXDWWN motif motif. Residues 385 to 393 (WQNWNIPVH), Tyr401, and Arg415 contribute to the an acyl-CoA site. The segment at 391-405 (PVHKWCIRHFYKPML) is amphipathic helix (AH). Residues 411-431 (KWMARTGVFWASAFFHEYLVS) traverse the membrane as a helical segment. Residue His426 is part of the active site. Over 432-439 (IPLRMFRL) the chain is Lumenal. A helical transmembrane segment spans residues 440 to 458 (WAFTAMMAQVPLAWIVNRF). Over 459 to 460 (FQ) the chain is Cytoplasmic. Residues 461 to 492 (GNYGNAAVWVTLIIGQPVAVLMYVHDYYVLNY) traverse the membrane as a helical segment. Position 488 (Tyr488) interacts with an acyl-CoA. Residues 493–498 (DAPVGA) are Lumenal-facing.

Belongs to the membrane-bound acyltransferase family. Sterol o-acyltransferase subfamily. As to quaternary structure, homodimer or homotetramer; both forms have similar enzymatic activities.

Its subcellular location is the endoplasmic reticulum membrane. It carries out the reaction an acyl-CoA + a 1,2-diacyl-sn-glycerol = a triacyl-sn-glycerol + CoA. The catalysed reaction is all-trans-retinol + an acyl-CoA = an all-trans-retinyl ester + CoA. It catalyses the reaction 2-(9Z-octadecenoyl)-glycerol + (9Z)-octadecenoyl-CoA = 1,2-di-(9Z-octadecenoyl)-sn-glycerol + CoA. The enzyme catalyses 1,2-di-(9Z-octadecenoyl)-sn-glycerol + (9Z)-octadecenoyl-CoA = 1,2,3-tri-(9Z-octadecenoyl)-glycerol + CoA. It carries out the reaction all-trans-retinol + hexadecanoyl-CoA = all-trans-retinyl hexadecanoate + CoA. The catalysed reaction is 1-O-(9Z-octadecenyl)-glycerol + (9Z)-octadecenoyl-CoA = 1-O-(9Z-octadecyl)-3-(9Z-octadecenoyl)-glycerol + CoA. It catalyses the reaction 1-O-(9Z-octadecyl)-3-(9Z-octadecenoyl)-glycerol + (9Z)-octadecenoyl-CoA = 1-O-(9Z-octadecenyl)-2,3-di-(9Z-octadecenoyl)glycerol + CoA. The enzyme catalyses 1-(9Z-octadecenoyl)-glycerol + (9Z)-octadecenoyl-CoA = 1,2-di-(9Z-octadecenoyl)-glycerol + CoA. It carries out the reaction 1,2-di-(9Z-octadecenoyl)-glycerol + (9Z)-octadecenoate + H(+) = 1,2,3-tri-(9Z-octadecenoyl)-glycerol + H2O. The catalysed reaction is 1-octadecanoyl-2-(5Z,8Z,11Z,14Z-eicosatetraenoyl)-sn-glycerol + (9Z)-octadecenoyl-CoA = 1-octadecanoyl-2-(5Z,8Z,11Z,14Z)-eicosatetraenoyl-3-(9Z)-octadecenoyl-sn-glycerol + CoA. It catalyses the reaction hexadecane-1,2-diol + 2 hexadecanoyl-CoA = 1,2-O,O-dihexadecanoyl-1,2-hexadecanediol + 2 CoA. The enzyme catalyses hexadecane-1,2-diol + hexadecanoyl-CoA = 2-hydroxyhexadecyl hexadecanoate + CoA. It carries out the reaction 2-(9Z-octadecenoyl)-glycerol + hexadecanoyl-CoA = 1-hexadecanoyl-2-(9Z-octadecenoyl)-sn-glycerol + CoA. The catalysed reaction is 1,2-di-(9Z-octadecenoyl)-sn-glycerol + hexadecanoyl-CoA = 1,2-di-(9Z)-octadecenoyl-3-hexadecanoyl-sn-glycerol + CoA. It catalyses the reaction hexadecan-1-ol + hexadecanoyl-CoA = hexadecanyl hexadecanoate + CoA. The enzyme catalyses 13-cis-retinol + hexadecanoyl-CoA = 13-cis-retinyl hexadecanoate + CoA. It carries out the reaction 1,3-di-(9Z-octadecenoyl)-glycerol + (9Z)-octadecenoyl-CoA = 1,2,3-tri-(9Z-octadecenoyl)-glycerol + CoA. The catalysed reaction is 2,3-di-(9Z)-octadecenoyl-sn-glycerol + (9Z)-octadecenoyl-CoA = 1,2,3-tri-(9Z-octadecenoyl)-glycerol + CoA. It functions in the pathway lipid metabolism; glycerolipid metabolism. Catalyzes the terminal and only committed step in triacylglycerol synthesis by using diacylglycerol and fatty acyl CoA as substrates. Highly expressed in epithelial cells of the small intestine and its activity is essential for the absorption of dietary fats. In liver, plays a role in esterifying exogenous fatty acids to glycerol, and is required to synthesize fat for storage. Also present in female mammary glands, where it produces fat in the milk. May be involved in VLDL (very low density lipoprotein) assembly. In contrast to DGAT2 it is not essential for survival. Functions as the major acyl-CoA retinol acyltransferase (ARAT) in the skin, where it acts to maintain retinoid homeostasis and prevent retinoid toxicity leading to skin and hair disorders. Exhibits additional acyltransferase activities, includin acyl CoA:monoacylglycerol acyltransferase (MGAT), wax monoester and wax diester synthases. Also able to use 1-monoalkylglycerol (1-MAkG) as an acyl acceptor for the synthesis of monoalkyl-monoacylglycerol (MAMAG). This Rattus norvegicus (Rat) protein is Diacylglycerol O-acyltransferase 1.